Consider the following 129-residue polypeptide: Putative membrane protein insertion efficiency factor (129 aa).

The protein belongs to the UPF0161 family.

It localises to the cell inner membrane. In terms of biological role, could be involved in insertion of integral membrane proteins into the membrane. The polypeptide is Putative membrane protein insertion efficiency factor (Rhodopseudomonas palustris (strain ATCC BAA-98 / CGA009)).